A 263-amino-acid chain; its full sequence is Stress-response A/B barrel domain-containing protein UP3 (263 aa).

Stress-response A/B barrel domains lie at 49–142 and 158–252; these read IEHI…AVDW and VAKL…VVEF. Positions 261-263 match the Peroxisomal targeting signal motif; the sequence is SSL.

Homodimer.

It is found in the peroxisome. Its function is as follows. Involved in stress response. This Arabidopsis thaliana (Mouse-ear cress) protein is Stress-response A/B barrel domain-containing protein UP3.